The sequence spans 260 residues: 5'-nucleotidase SurE (260 aa).

A divalent metal cation-binding residues include aspartate 8, aspartate 9, serine 39, and asparagine 96.

It belongs to the SurE nucleotidase family. Requires a divalent metal cation as cofactor.

The protein resides in the cytoplasm. It catalyses the reaction a ribonucleoside 5'-phosphate + H2O = a ribonucleoside + phosphate. Functionally, nucleotidase that shows phosphatase activity on nucleoside 5'-monophosphates. This is 5'-nucleotidase SurE from Moorella thermoacetica (strain ATCC 39073 / JCM 9320).